A 412-amino-acid polypeptide reads, in one-letter code: Tyrosine--tRNA ligase (412 aa).

Tyr31 contributes to the L-tyrosine binding site. The 'HIGH' region motif lies at 36 to 45; that stretch reads PTAPSLHIGH. Residues Tyr162 and Gln166 each contribute to the L-tyrosine site. Residues 222–226 carry the 'KMSKS' region motif; the sequence is KIGKT. Lys225 is a binding site for ATP. Residues 345–411 enclose the S4 RNA-binding domain; it reads KRWLDIVVEL…GKRKKQVIDL (67 aa).

This sequence belongs to the class-I aminoacyl-tRNA synthetase family. TyrS type 1 subfamily. Homodimer.

The protein resides in the cytoplasm. The catalysed reaction is tRNA(Tyr) + L-tyrosine + ATP = L-tyrosyl-tRNA(Tyr) + AMP + diphosphate + H(+). Catalyzes the attachment of tyrosine to tRNA(Tyr) in a two-step reaction: tyrosine is first activated by ATP to form Tyr-AMP and then transferred to the acceptor end of tRNA(Tyr). The protein is Tyrosine--tRNA ligase of Chlamydia trachomatis serovar A (strain ATCC VR-571B / DSM 19440 / HAR-13).